Consider the following 1770-residue polypeptide: Transposon Ty2-F Gag-Pol polyprotein (1770 aa).

Polar residues-rich tracts occupy residues 1 to 11 (MESQQLHQNPH), 19 to 39 (ASVT…SASN), and 49 to 60 (KVNSQQETTPGT). 2 disordered regions span residues 1-86 (MESQ…GQYQ) and 359-453 (QHSE…LPDH). Positions 295-397 (ENNINVSDRL…SSKPRAAKAH (103 aa)) are RNA-binding. The span at 369–381 (TSPNTTNTKVTTR) shows a compositional bias: low complexity. Composition is skewed to polar residues over residues 399–408 (IATSSKFSRV) and 415–435 (ESTV…GQQQ). Residue Asp-457 is the For protease activity; shared with dimeric partner of the active site. The tract at residues 579 to 636 (NVNKSKSVNKYPYPLIHRMLGHANFRSIQKSLKKNAVTYLKESDIEWSNASTYQCPDC) is integrase-type zinc finger-like. The 176-residue stretch at 656–831 (ESYEPFQYLH…AGLDITTILP (176 aa)) folds into the Integrase catalytic domain. Mg(2+)-binding residues include Asp-667 and Asp-732. Disordered stretches follow at residues 1004-1034 (MGGT…STNE), 1059-1135 (TEEP…KSSK), 1146-1165 (LPLP…VSKD), and 1170-1205 (HSRQ…TEIE). 2 stretches are compositionally biased toward polar residues: residues 1009–1034 (ESDT…STNE) and 1065–1082 (QRNS…STPS). Basic and acidic residues predominate over residues 1151-1165 (LTHKSPTDTSDVSKD). The Bipartite nuclear localization signal motif lies at 1193–1227 (KKRSLEDNETEIEVSRDTWNNKNMRSLEPPRSKKR). The Reverse transcriptase Ty1/copia-type domain maps to 1353 to 1491 (NDYYITQLDI…DILGLEIKYQ (139 aa)). Residues Asp-1361, Asp-1442, Asp-1443, Asp-1625, Glu-1667, and Asp-1700 each contribute to the Mg(2+) site. An RNase H Ty1/copia-type domain is found at 1625–1767 (DASYGNQPYY…IKTFKLLTNK (143 aa)).

The capsid protein forms a homotrimer, from which the VLPs are assembled. The protease is a homodimer, whose active site consists of two apposed aspartic acid residues. Initially, virus-like particles (VLPs) are composed of the structural unprocessed proteins Gag and Gag-Pol, and also contain the host initiator methionine tRNA (tRNA(i)-Met) which serves as a primer for minus-strand DNA synthesis, and a dimer of genomic Ty RNA. Processing of the polyproteins occurs within the particle and proceeds by an ordered pathway, called maturation. First, the protease (PR) is released by autocatalytic cleavage of the Gag-Pol polyprotein, and this cleavage is a prerequisite for subsequent processing at the remaining sites to release the mature structural and catalytic proteins. Maturation takes place prior to the RT reaction and is required to produce transposition-competent VLPs.

It localises to the cytoplasm. The protein localises to the nucleus. The enzyme catalyses DNA(n) + a 2'-deoxyribonucleoside 5'-triphosphate = DNA(n+1) + diphosphate. It catalyses the reaction Endonucleolytic cleavage to 5'-phosphomonoester.. Capsid protein (CA) is the structural component of the virus-like particle (VLP), forming the shell that encapsulates the retrotransposons dimeric RNA genome. The particles are assembled from trimer-clustered units and there are holes in the capsid shells that allow for the diffusion of macromolecules. CA also has nucleocapsid-like chaperone activity, promoting primer tRNA(i)-Met annealing to the multipartite primer-binding site (PBS), dimerization of Ty2 RNA and initiation of reverse transcription. Its function is as follows. The aspartyl protease (PR) mediates the proteolytic cleavages of the Gag and Gag-Pol polyproteins after assembly of the VLP. In terms of biological role, reverse transcriptase/ribonuclease H (RT) is a multifunctional enzyme that catalyzes the conversion of the retro-elements RNA genome into dsDNA within the VLP. The enzyme displays a DNA polymerase activity that can copy either DNA or RNA templates, and a ribonuclease H (RNase H) activity that cleaves the RNA strand of RNA-DNA heteroduplexes during plus-strand synthesis and hydrolyzes RNA primers. The conversion leads to a linear dsDNA copy of the retrotransposon that includes long terminal repeats (LTRs) at both ends. Functionally, integrase (IN) targets the VLP to the nucleus, where a subparticle preintegration complex (PIC) containing at least integrase and the newly synthesized dsDNA copy of the retrotransposon must transit the nuclear membrane. Once in the nucleus, integrase performs the integration of the dsDNA into the host genome. This chain is Transposon Ty2-F Gag-Pol polyprotein (TY2B-F), found in Saccharomyces cerevisiae (strain ATCC 204508 / S288c) (Baker's yeast).